The following is a 248-amino-acid chain: MALLEICCYSMECALTAQRNGADRIELCAAPKEGGLTPSFGVLRSVREHITIPVHPIIRPRGGDFYYTDGEFAAMLEDIRLVRELGFPGLVTGVLTVDGDVDMSRMEKIMAAAGPLAVTFHRAFDMCANPFNALKNLADAGVARVLTSGQKADAAQGLSIIMELIAQGDAPIIMAGAGVRANNLQNFLDAGVREVHSSAGVLLPSPMRYRNQGLSMSADIQADEYSRYRVEGASVAEMKGIIVRHQAK.

This sequence belongs to the CutC family. As to quaternary structure, homodimer.

It localises to the cytoplasm. The protein is PF03932 family protein CutC of Salmonella heidelberg (strain SL476).